Here is a 746-residue protein sequence, read N- to C-terminus: Ferric enterobactin receptor (746 aa).

A signal peptide spans 1–25 (MSSRALPAVPFLLLSSCLLANAVHA). The short motif at 39–44 (QTVVAT) is the TonB box element. Residues 47–174 (EETKQAPGVS…AGGVVNIITK (128 aa)) enclose the TBDR plug domain. 3 disordered regions span residues 82–102 (VNLT…IDIR), 235–254 (GHES…GREG), and 397–424 (QKLD…KNRS). Residues 84–98 (LTGNSSSGQRGNNRQ) are compositionally biased toward polar residues. One can recognise a TBDR beta-barrel domain in the interval 179–746 (ETHGNLSVYS…TFYTSLTASF (568 aa)). Over residues 402 to 411 (PSSNTQNTEE) the composition is skewed to polar residues. The short motif at 729–746 (ATYNEPGRTFYTSLTASF) is the TonB C-terminal box element.

Belongs to the TonB-dependent receptor family.

It localises to the cell outer membrane. Functionally, specific receptor for the siderophore ferric enterobactin. The protein is Ferric enterobactin receptor (pfeA) of Pseudomonas aeruginosa (strain ATCC 15692 / DSM 22644 / CIP 104116 / JCM 14847 / LMG 12228 / 1C / PRS 101 / PAO1).